The primary structure comprises 133 residues: Magnetosome protein MamC (133 aa).

Topologically, residues 1-5 (MAAFN) are cytoplasmic. A helical transmembrane segment spans residues 6–26 (LALYLSKSIPGVGVLGGVIGG). At 27–67 (SAALAKNLKAKQRGEITTEEAVIDTGKEALGAGLATTVSAY) the chain is on the lumenal side. Residues 37-57 (KQRGEITTEEAVIDTGKEALG) are magnetite interacting component (MIC) binds magnetite. The helical transmembrane segment at 68-88 (AAGVVGGGLVVSLGTAFAVAV) threads the bilayer. The Cytoplasmic portion of the chain corresponds to 89 to 133 (AGKYAWDYGMEQMEAKLQEKKHQEQGGQTYGDNPDPFDPQELETP). The disordered stretch occupies residues 105-133 (LQEKKHQEQGGQTYGDNPDPFDPQELETP).

Belongs to the magnetosome MamC family. In terms of assembly, probably interacts with MamA.

The protein resides in the magnetosome membrane. Functionally, probably helps control the size of magnetite crystals; in vitro synthesis of magnetite yields larger and more well-developed magnetite crystals in the presence of purified MamC. Binds Fe(3+). The lumenal domain probably binds magnetite crystals, affecting crystal size and shape. Purified MamC self-assembles into micelles in the presence of ferric chloride hexahydrate (FeCl(3).6H(2)O); both oxygen and iron are present in the proteinaceous micelles. Whether this is relevant in vivo is unknown. This chain is Magnetosome protein MamC, found in Magnetococcus marinus (strain ATCC BAA-1437 / JCM 17883 / MC-1).